Reading from the N-terminus, the 404-residue chain is Serine/threonine-protein phosphatase 2A regulatory subunit rsa-1 (404 aa).

Part of a complex consisting of a common heterodimeric core enzyme, composed of catalytic subunit let-92 and constant regulatory subunit paa-1, that associates with a variety of regulatory subunits which confer distinct properties to the holoenzyme. Interacts with rsa-2, spd-5 and tpxl-1.

The protein localises to the cytoplasm. Its subcellular location is the cytoskeleton. The protein resides in the microtubule organizing center. It is found in the centrosome. In terms of biological role, regulatory subunit of phosphatase let-92 which recruits let-92/paa-1 complex to the centrosomes, thereby regulating microtubule outgrowth from centrosomes and mitotic spindle assembly ensuring the stability of kinetochore microtubules. The chain is Serine/threonine-protein phosphatase 2A regulatory subunit rsa-1 from Caenorhabditis elegans.